A 264-amino-acid chain; its full sequence is Protein OXIDATIVE STRESS 3 LIKE 1 (264 aa).

Disordered stretches follow at residues 1–76 (MDCV…GPLE) and 178–225 (TGEG…QGSF). The segment covering 29–43 (PSDSSSSPSSSASSS) has biased composition (low complexity). The segment covering 47–56 (NSDDGEKSSE) has biased composition (basic and acidic residues). The segment covering 57–67 (DGGDDAGENEV) has biased composition (acidic residues). Low complexity predominate over residues 179 to 201 (GEGSSSGGDSSPGSSPTTSGSPP). The span at 203–212 (QLHHHQHQMK) shows a compositional bias: basic residues.

The protein resides in the nucleus. Functionally, promotes slightly the tolerance to zinc (Zn) and to oxidizing chemicals (e.g. diamide). This is Protein OXIDATIVE STRESS 3 LIKE 1 from Arabidopsis thaliana (Mouse-ear cress).